We begin with the raw amino-acid sequence, 956 residues long: Outer capsid protein VP2 (956 aa).

This sequence belongs to the orbivirus VP2 family.

The protein localises to the virion. The VP2 protein is one of the two proteins (with VP5) which constitute the virus particle outer capsid. It is the major target of the host immunogenic response. Responsible for viral attachment to target host cell, probably by binding to sialic acid. This attachment induces virion internalization predominantly through clathrin-dependent endocytosis. This chain is Outer capsid protein VP2 (Segment-2), found in Bluetongue virus 10 (isolate USA) (BTV 10).